We begin with the raw amino-acid sequence, 61 residues long: Truncated 3-beta hydroxy-5-ene steroid dehydrogenase homolog (61 aa).

This sequence belongs to the 3-beta-HSD family.

The sequence is that of Truncated 3-beta hydroxy-5-ene steroid dehydrogenase homolog from Variola virus (isolate Human/India/Ind3/1967) (VARV).